Consider the following 487-residue polypeptide: Alpha-1,4-L-rhamnosidase (487 aa).

The N-terminal stretch at 1-30 is a signal peptide; it reads MKNKKRLCHILKYIITCFLFGVIFIIPIQA. Glu-199 functions as the Proton donor in the catalytic mechanism.

The protein belongs to the glycosyl hydrolase 39 family.

The protein localises to the periplasm. Functionally, alpha-rhamnosidase involved in ulvan degradation. Ulvan is the main polysaccharide component of the Ulvales (green seaweed) cell wall. It is composed of disaccharide building blocks comprising 3-sulfated rhamnose (Rha3S) linked to D-glucuronic acid (GlcA), L-iduronic acid (IduA), or D-xylose (Xyl). Endo-acting alpha-1,4-L-rhamnosidase cleaves rhamnose sections interspersed between xylose residues within the polymer, degrading larger oligomers with consecutive Xyl-Rha3S units that are resistant to the ulvan lyases and producing dimers Xyl-Rha3S and Xyl2S-Rha3S as the smallest products. The polypeptide is Alpha-1,4-L-rhamnosidase (Formosa agariphila (strain DSM 15362 / KCTC 12365 / LMG 23005 / KMM 3901 / M-2Alg 35-1)).